Consider the following 474-residue polypeptide: Methylenetetrahydrofolate--tRNA-(uracil-5-)-methyltransferase TrmFO (474 aa).

Residue 13-18 coordinates FAD; the sequence is GGGLAG.

It belongs to the MnmG family. TrmFO subfamily. Requires FAD as cofactor.

Its subcellular location is the cytoplasm. It catalyses the reaction uridine(54) in tRNA + (6R)-5,10-methylene-5,6,7,8-tetrahydrofolate + NADH + H(+) = 5-methyluridine(54) in tRNA + (6S)-5,6,7,8-tetrahydrofolate + NAD(+). The catalysed reaction is uridine(54) in tRNA + (6R)-5,10-methylene-5,6,7,8-tetrahydrofolate + NADPH + H(+) = 5-methyluridine(54) in tRNA + (6S)-5,6,7,8-tetrahydrofolate + NADP(+). In terms of biological role, catalyzes the folate-dependent formation of 5-methyl-uridine at position 54 (M-5-U54) in all tRNAs. The chain is Methylenetetrahydrofolate--tRNA-(uracil-5-)-methyltransferase TrmFO from Bartonella tribocorum (strain CIP 105476 / IBS 506).